An 82-amino-acid polypeptide reads, in one-letter code: Exodeoxyribonuclease 7 small subunit (82 aa).

Belongs to the XseB family. Heterooligomer composed of large and small subunits.

The protein resides in the cytoplasm. The enzyme catalyses Exonucleolytic cleavage in either 5'- to 3'- or 3'- to 5'-direction to yield nucleoside 5'-phosphates.. Bidirectionally degrades single-stranded DNA into large acid-insoluble oligonucleotides, which are then degraded further into small acid-soluble oligonucleotides. This chain is Exodeoxyribonuclease 7 small subunit, found in Mannheimia succiniciproducens (strain KCTC 0769BP / MBEL55E).